Consider the following 236-residue polypeptide: UPF0502 protein Bcenmc03_4618 (236 aa).

Belongs to the UPF0502 family.

The sequence is that of UPF0502 protein Bcenmc03_4618 from Burkholderia orbicola (strain MC0-3).